Consider the following 627-residue polypeptide: Ski protein homolog (627 aa).

Residues 1 to 12 (MSDSPIGSSQQV) show a composition bias toward polar residues. Disordered stretches follow at residues 1 to 22 (MSDS…PDLM), 34 to 58 (LHEE…KDSR), and 299 to 318 (EYDE…METP).

It belongs to the SKI family. May interact with daf-3. As to expression, expressed in ganglia in the head and tail and in the anterior pharynx.

Its subcellular location is the nucleus. Probable component of transcriptional regulatory complex with SMAD protein daf-3. Required to regulate entry into a developmentally arrested larval state known as dauer, in response to harsh environmental conditions. Involved in larvae undergoing cell-cycle arrest during the dauer stage. The chain is Ski protein homolog from Caenorhabditis elegans.